The primary structure comprises 238 residues: Ribonuclease PH (238 aa).

Phosphate is bound by residues R86 and 124–126 (GTR).

It belongs to the RNase PH family. Homohexameric ring arranged as a trimer of dimers.

It catalyses the reaction tRNA(n+1) + phosphate = tRNA(n) + a ribonucleoside 5'-diphosphate. Its function is as follows. Phosphorolytic 3'-5' exoribonuclease that plays an important role in tRNA 3'-end maturation. Removes nucleotide residues following the 3'-CCA terminus of tRNAs; can also add nucleotides to the ends of RNA molecules by using nucleoside diphosphates as substrates, but this may not be physiologically important. Probably plays a role in initiation of 16S rRNA degradation (leading to ribosome degradation) during starvation. In Citrobacter koseri (strain ATCC BAA-895 / CDC 4225-83 / SGSC4696), this protein is Ribonuclease PH.